The sequence spans 398 residues: Bifunctional enzyme IspD/IspF (398 aa).

The interval 1-234 is 2-C-methyl-D-erythritol 4-phosphate cytidylyltransferase; sequence MPSSKRTAAI…ARLAAALGDI (234 aa). The segment at 235 to 398 is 2-C-methyl-D-erythritol 2,4-cyclodiphosphate synthase; sequence RTGTGYDVHA…LPWNDKGRDT (164 aa). 2 residues coordinate a divalent metal cation: D241 and H243. 4-CDP-2-C-methyl-D-erythritol 2-phosphate contacts are provided by residues 241–243 and 267–268; these read DVH and HS. An a divalent metal cation-binding site is contributed by H275. Residues 289–291, 365–368, F372, and R375 each bind 4-CDP-2-C-methyl-D-erythritol 2-phosphate; these read DIG and TTSE.

It in the N-terminal section; belongs to the IspD/TarI cytidylyltransferase family. IspD subfamily. In the C-terminal section; belongs to the IspF family. The cofactor is a divalent metal cation.

The catalysed reaction is 2-C-methyl-D-erythritol 4-phosphate + CTP + H(+) = 4-CDP-2-C-methyl-D-erythritol + diphosphate. It carries out the reaction 4-CDP-2-C-methyl-D-erythritol 2-phosphate = 2-C-methyl-D-erythritol 2,4-cyclic diphosphate + CMP. Its pathway is isoprenoid biosynthesis; isopentenyl diphosphate biosynthesis via DXP pathway; isopentenyl diphosphate from 1-deoxy-D-xylulose 5-phosphate: step 2/6. It participates in isoprenoid biosynthesis; isopentenyl diphosphate biosynthesis via DXP pathway; isopentenyl diphosphate from 1-deoxy-D-xylulose 5-phosphate: step 4/6. Its function is as follows. Bifunctional enzyme that catalyzes the formation of 4-diphosphocytidyl-2-C-methyl-D-erythritol from CTP and 2-C-methyl-D-erythritol 4-phosphate (MEP) (IspD), and catalyzes the conversion of 4-diphosphocytidyl-2-C-methyl-D-erythritol 2-phosphate (CDP-ME2P) to 2-C-methyl-D-erythritol 2,4-cyclodiphosphate (ME-CPP) with a corresponding release of cytidine 5-monophosphate (CMP) (IspF). The chain is Bifunctional enzyme IspD/IspF from Nitrobacter winogradskyi (strain ATCC 25391 / DSM 10237 / CIP 104748 / NCIMB 11846 / Nb-255).